The sequence spans 95 residues: Defensin (95 aa).

A signal peptide spans 1 to 17 (MKNYVFALLVVTAVAIA). The propeptide occupies 18–55 (LPNEDKNAPMRVHLLPQKEDESLKLEVTPVKEHHRTRR). Cystine bridges form between Cys58-Cys85, Cys71-Cys91, and Cys75-Cys93.

The protein belongs to the invertebrate defensin family. Type 1 subfamily.

It localises to the secreted. In terms of biological role, antibacterial peptide mostly active against Gram-positive bacteria. In Formica aquilonia (Red wood ant), this protein is Defensin.